We begin with the raw amino-acid sequence, 277 residues long: MAAVSVYERPVGGFSFDNCRRNAVLEADFAKKGYKLPTARKTGTTIAGVVYKDGIVLGADTRATEGMVVADKNCSKIHFISPNIYCCGAGTAADTDMTTQLISSNLELHSLSTGRLPRVVTANRMLKQMLFRYQGYIGAALVLGGVDVTGPHLYSIYPHGSTDKLPYVTMGSGSLAAMAVFEDKFRPDMEEEEAKKLVSEAIAAGIFNDLGSGSNIDLCVISKSKLDFLRPYSVPNKKGTRFGRYRCEKGTNAVLTEKVTTLEIEVLEETVQTMDTS.

Positions 1-43 (MAAVSVYERPVGGFSFDNCRRNAVLEADFAKKGYKLPTARKTG) are cleaved as a propeptide — removed in mature form. The Nucleophile role is filled by Thr44.

This sequence belongs to the peptidase T1B family. In terms of assembly, the 26S proteasome consists of a 20S proteasome core and two 19S regulatory subunits. The 20S proteasome core is a barrel-shaped complex made of 28 subunits that are arranged in four stacked rings. The two outer rings are each formed by seven alpha subunits, and the two inner rings are formed by seven beta subunits. The proteolytic activity is exerted by three beta-subunits PSMB5, PSMB6 and PSMB7.

It localises to the cytoplasm. It is found in the nucleus. It catalyses the reaction Cleavage of peptide bonds with very broad specificity.. Component of the 20S core proteasome complex involved in the proteolytic degradation of most intracellular proteins. This complex plays numerous essential roles within the cell by associating with different regulatory particles. Associated with two 19S regulatory particles, forms the 26S proteasome and thus participates in the ATP-dependent degradation of ubiquitinated proteins. The 26S proteasome plays a key role in the maintenance of protein homeostasis by removing misfolded or damaged proteins that could impair cellular functions, and by removing proteins whose functions are no longer required. Associated with the PA200 or PA28, the 20S proteasome mediates ubiquitin-independent protein degradation. This type of proteolysis is required in several pathways including spermatogenesis (20S-PA200 complex) or generation of a subset of MHC class I-presented antigenic peptides (20S-PA28 complex). Within the 20S core complex, PSMB7 displays a trypsin-like activity. In Bos taurus (Bovine), this protein is Proteasome subunit beta type-7 (PSMB7).